The chain runs to 440 residues: Microtubule-associated tumor suppressor 1 homolog A (440 aa).

The segment at 44 to 67 (KSRTNSKNPQPPTNGQPDLVPPES) is disordered. Residues 69-401 (SRNVEYYKAQ…RLSMENEELL (333 aa)) are a coiled coil. The disordered stretch occupies residues 407–440 (GDLNSPRKISPSPSLNLQSPRTSGMFSSPPVSPR). Residues 417 to 432 (PSPSLNLQSPRTSGMF) show a composition bias toward polar residues.

The protein belongs to the MTUS1 family. As to quaternary structure, homodimer.

The protein resides in the mitochondrion. It is found in the golgi apparatus. It localises to the cell membrane. The protein localises to the nucleus. Functionally, may inhibit cell proliferation. The sequence is that of Microtubule-associated tumor suppressor 1 homolog A (mtus1a) from Danio rerio (Zebrafish).